A 170-amino-acid chain; its full sequence is Large ribosomal subunit protein uL10 (170 aa).

It belongs to the universal ribosomal protein uL10 family. Part of the ribosomal stalk of the 50S ribosomal subunit. The N-terminus interacts with L11 and the large rRNA to form the base of the stalk. The C-terminus forms an elongated spine to which L12 dimers bind in a sequential fashion forming a multimeric L10(L12)X complex.

Forms part of the ribosomal stalk, playing a central role in the interaction of the ribosome with GTP-bound translation factors. This chain is Large ribosomal subunit protein uL10, found in Nitratiruptor sp. (strain SB155-2).